Consider the following 353-residue polypeptide: Photosystem II D2 protein (353 aa).

Thr-2 carries the post-translational modification N-acetylthreonine. Thr-2 bears the Phosphothreonine mark. Residues 41–61 (CAYFALGGWFTGTTFVTSWYT) traverse the membrane as a helical segment. His-118 contacts chlorophyll a. A helical transmembrane segment spans residues 125–141 (GFMLRQFELARSVQLRP). Residues Gln-130 and Asn-143 each contribute to the pheophytin a site. A helical transmembrane segment spans residues 153 to 166 (VFVSVFLIYPLGQS). His-198 provides a ligand contact to chlorophyll a. The helical transmembrane segment at 208–228 (AALLCAIHGATVENTLFEDGD) threads the bilayer. A plastoquinone-binding residues include His-215 and Phe-262. His-215 lines the Fe cation pocket. His-269 lines the Fe cation pocket. The helical transmembrane segment at 279–295 (GLWMSALGVVGLALNLR) threads the bilayer.

The protein belongs to the reaction center PufL/M/PsbA/D family. As to quaternary structure, PSII is composed of 1 copy each of membrane proteins PsbA, PsbB, PsbC, PsbD, PsbE, PsbF, PsbH, PsbI, PsbJ, PsbK, PsbL, PsbM, PsbT, PsbX, PsbY, PsbZ, Psb30/Ycf12, at least 3 peripheral proteins of the oxygen-evolving complex and a large number of cofactors. It forms dimeric complexes. The D1/D2 heterodimer binds P680, chlorophylls that are the primary electron donor of PSII, and subsequent electron acceptors. It shares a non-heme iron and each subunit binds pheophytin, quinone, additional chlorophylls, carotenoids and lipids. There is also a Cl(-1) ion associated with D1 and D2, which is required for oxygen evolution. The PSII complex binds additional chlorophylls, carotenoids and specific lipids. serves as cofactor.

The protein localises to the plastid. The protein resides in the chloroplast thylakoid membrane. The catalysed reaction is 2 a plastoquinone + 4 hnu + 2 H2O = 2 a plastoquinol + O2. Its function is as follows. Photosystem II (PSII) is a light-driven water:plastoquinone oxidoreductase that uses light energy to abstract electrons from H(2)O, generating O(2) and a proton gradient subsequently used for ATP formation. It consists of a core antenna complex that captures photons, and an electron transfer chain that converts photonic excitation into a charge separation. The D1/D2 (PsbA/PsbD) reaction center heterodimer binds P680, the primary electron donor of PSII as well as several subsequent electron acceptors. D2 is needed for assembly of a stable PSII complex. The chain is Photosystem II D2 protein from Lemna minor (Common duckweed).